Here is a 476-residue protein sequence, read N- to C-terminus: Light-independent protochlorophyllide reductase subunit N (476 aa).

Residues Cys31, Cys56, and Cys116 each contribute to the [4Fe-4S] cluster site.

The protein belongs to the BchN/ChlN family. As to quaternary structure, protochlorophyllide reductase is composed of three subunits; ChlL, ChlN and ChlB. Forms a heterotetramer of two ChlB and two ChlN subunits. [4Fe-4S] cluster is required as a cofactor.

Its subcellular location is the plastid. The protein resides in the chloroplast. The enzyme catalyses chlorophyllide a + oxidized 2[4Fe-4S]-[ferredoxin] + 2 ADP + 2 phosphate = protochlorophyllide a + reduced 2[4Fe-4S]-[ferredoxin] + 2 ATP + 2 H2O. It functions in the pathway porphyrin-containing compound metabolism; chlorophyll biosynthesis (light-independent). Its function is as follows. Component of the dark-operative protochlorophyllide reductase (DPOR) that uses Mg-ATP and reduced ferredoxin to reduce ring D of protochlorophyllide (Pchlide) to form chlorophyllide a (Chlide). This reaction is light-independent. The NB-protein (ChlN-ChlB) is the catalytic component of the complex. This Staurastrum punctulatum (Green alga) protein is Light-independent protochlorophyllide reductase subunit N.